The following is a 332-amino-acid chain: Acetyl-coenzyme A carboxylase carboxyl transferase subunit beta (332 aa).

The 270-residue stretch at 24–293 folds into the CoA carboxyltransferase N-terminal domain; that stretch reads LWIKCPDSGH…PEVIVESEPE (270 aa). The disordered stretch occupies residues 288 to 332; it reads VESEPEPEPEPVVAEIIPPTSDLPVSAPAPAPVAAQTPAPAAPSA. A compositionally biased stretch (low complexity) spans 298-332; that stretch reads PVVAEIIPPTSDLPVSAPAPAPVAAQTPAPAAPSA.

Belongs to the AccD/PCCB family. In terms of assembly, acetyl-CoA carboxylase is a heterohexamer composed of biotin carboxyl carrier protein (AccB), biotin carboxylase (AccC) and two subunits each of ACCase subunit alpha (AccA) and ACCase subunit beta (AccD).

The protein resides in the cytoplasm. It catalyses the reaction N(6)-carboxybiotinyl-L-lysyl-[protein] + acetyl-CoA = N(6)-biotinyl-L-lysyl-[protein] + malonyl-CoA. Its pathway is lipid metabolism; malonyl-CoA biosynthesis; malonyl-CoA from acetyl-CoA: step 1/1. Functionally, component of the acetyl coenzyme A carboxylase (ACC) complex. Biotin carboxylase (BC) catalyzes the carboxylation of biotin on its carrier protein (BCCP) and then the CO(2) group is transferred by the transcarboxylase to acetyl-CoA to form malonyl-CoA. This chain is Acetyl-coenzyme A carboxylase carboxyl transferase subunit beta, found in Rhodopseudomonas palustris (strain BisB18).